A 380-amino-acid polypeptide reads, in one-letter code: Succinyl-diaminopimelate desuccinylase (380 aa).

His69 is a binding site for Zn(2+). The active site involves Asp71. Asp102 is a binding site for Zn(2+). Glu135 (proton acceptor) is an active-site residue. Glu136, Glu164, and His353 together coordinate Zn(2+).

This sequence belongs to the peptidase M20A family. DapE subfamily. Homodimer. It depends on Zn(2+) as a cofactor. Co(2+) serves as cofactor.

It catalyses the reaction N-succinyl-(2S,6S)-2,6-diaminopimelate + H2O = (2S,6S)-2,6-diaminopimelate + succinate. It participates in amino-acid biosynthesis; L-lysine biosynthesis via DAP pathway; LL-2,6-diaminopimelate from (S)-tetrahydrodipicolinate (succinylase route): step 3/3. Catalyzes the hydrolysis of N-succinyl-L,L-diaminopimelic acid (SDAP), forming succinate and LL-2,6-diaminopimelate (DAP), an intermediate involved in the bacterial biosynthesis of lysine and meso-diaminopimelic acid, an essential component of bacterial cell walls. This chain is Succinyl-diaminopimelate desuccinylase, found in Cereibacter sphaeroides (strain ATCC 17023 / DSM 158 / JCM 6121 / CCUG 31486 / LMG 2827 / NBRC 12203 / NCIMB 8253 / ATH 2.4.1.) (Rhodobacter sphaeroides).